We begin with the raw amino-acid sequence, 80 residues long: MATPTQSPTNVPEETDPFFYDYATVQTVGMTLATIMFVLGIIIIISKKVKCRKADSRSESPTCKSCKSELPSSAPGGGGV.

Residues 1 to 22 (MATPTQSPTNVPEETDPFFYDY) are Extracellular-facing. Thr-3, Thr-5, and Thr-9 each carry an O-linked (GlcNAc) threonine glycan. A helical membrane pass occupies residues 23-45 (ATVQTVGMTLATIMFVLGIIIII). Residues 46–80 (SKKVKCRKADSRSESPTCKSCKSELPSSAPGGGGV) lie on the Cytoplasmic side of the membrane. Residues 56–80 (SRSESPTCKSCKSELPSSAPGGGGV) form a disordered region. Ser-73 is subject to Phosphoserine.

Belongs to the FXYD family. In terms of assembly, regulatory subunit of the sodium/potassium-transporting ATPase which is composed of a catalytic alpha subunit, a non-catalytic beta subunit and an additional regulatory subunit. The regulatory subunit, a member of the FXYD protein family, modulates the enzymatic activity in a tissue- and isoform-specific way by changing affinities of the Na+/K+-ATPase toward Na(+), K(+) or ATP. In terms of processing, O-glycosylated; required for stabilization and translocation to the plasma membrane. In terms of tissue distribution, expressed specifically in brain. Expressed in both neurons and glia.

It localises to the cell membrane. Functionally, associates with and regulates the activity of the sodium/potassium-transporting ATPase (NKA) which catalyzes the hydrolysis of ATP coupled with the exchange of Na(+) and K(+) ions across the plasma membrane. Reduces the apparent affinity for external K(+), an effect that depends on the presence of external Na(+) and voltage. Increases the apparent affinity for intracellular Na(+). This is FXYD domain-containing ion transport regulator 7 (Fxyd7) from Rattus norvegicus (Rat).